Here is a 281-residue protein sequence, read N- to C-terminus: UPF0500 protein C1orf216 homolog (281 aa).

The segment covering 1–12 has biased composition (polar residues); sequence MFTIQKPDTVSH. Residues 1 to 197 are disordered; sequence MFTIQKPDTV…SSSDSDSISV (197 aa). A compositionally biased stretch (basic and acidic residues) spans 45–74; that stretch reads TYDKNENWSQDKKGGEEGENKSKSEDEHSS. Low complexity-rich tracts occupy residues 92–102, 147–161, and 169–178; these read STGSEGISLSS, SSSL…VSAS, and PAPTTTPQEN. The span at 179–190 shows a compositional bias: acidic residues; that stretch reads PETEDSDVESSS. A coiled-coil region spans residues 198–257; sequence TLSEAFQSLQDKEKLKEREKEKHHAQLTMYRRLALLRWIRALQQKVRDQQNRLQESFDTI.

The protein belongs to the UPF0500 family.

This is UPF0500 protein C1orf216 homolog from Xenopus laevis (African clawed frog).